A 325-amino-acid polypeptide reads, in one-letter code: E3 ubiquitin-protein ligase EL5 (325 aa).

The interval 1-29 (MVRGVEQGGPAMDESSSSSSPSPVSAPAG) is disordered. The segment covering 15–28 (SSSSSSPSPVSAPA) has biased composition (low complexity). Residues 38 to 58 (IATVAAVLIVFAALTLAFVLL) traverse the membrane as a helical segment. A disordered region spans residues 70 to 105 (TTTSTSGRGRRPRPRRRSGSGGDGGTGGGVDPEVLR). The span at 77–87 (RGRRPRPRRRS) shows a compositional bias: basic residues. Residues 88–99 (GSGGDGGTGGGV) show a composition bias toward gly residues. The RING-type; atypical zinc finger occupies 134–176 (CAVCLAELEDGEEARFLPRCGHGFHAECVDMWLGSHSTCPLCR). Disordered regions lie at residues 267–289 (GAAG…GDVE) and 303–325 (AATP…HVRN). Low complexity predominate over residues 268 to 281 (AAGSTSSCSCATGG).

It is found in the cell membrane. It catalyses the reaction S-ubiquitinyl-[E2 ubiquitin-conjugating enzyme]-L-cysteine + [acceptor protein]-L-lysine = [E2 ubiquitin-conjugating enzyme]-L-cysteine + N(6)-ubiquitinyl-[acceptor protein]-L-lysine.. The protein operates within protein modification; protein ubiquitination. In terms of biological role, functions as an E3 ubiquitin-protein ligase in cooperation with the E2 ubiquitin conjugating enzymes UBC5A and UBC5B. Involved in root development. Required for the maintenance of cell viability after the initiation of root primordial formation. May mediate the degradation of cytotoxic proteins produced in root cells after the actions of auxin, cytokinin and jasmonic acid. Mediates 'Lys-48'-linked polyubiquitination of MBP in vitro. The chain is E3 ubiquitin-protein ligase EL5 (EL5.1) from Oryza sativa subsp. japonica (Rice).